We begin with the raw amino-acid sequence, 171 residues long: UPF0398 protein STER_0279 (171 aa).

The protein belongs to the UPF0398 family.

The chain is UPF0398 protein STER_0279 from Streptococcus thermophilus (strain ATCC BAA-491 / LMD-9).